A 101-amino-acid chain; its full sequence is Small ribosomal subunit protein uS14 (101 aa).

Belongs to the universal ribosomal protein uS14 family. In terms of assembly, part of the 30S ribosomal subunit. Contacts proteins S3 and S10.

Binds 16S rRNA, required for the assembly of 30S particles and may also be responsible for determining the conformation of the 16S rRNA at the A site. The protein is Small ribosomal subunit protein uS14 of Dinoroseobacter shibae (strain DSM 16493 / NCIMB 14021 / DFL 12).